The chain runs to 271 residues: 3-methyl-2-oxobutanoate hydroxymethyltransferase (271 aa).

2 residues coordinate Mg(2+): Asp51 and Asp90. 3-methyl-2-oxobutanoate is bound by residues 51–52 (DS), Asp90, and Lys118. Glu120 lines the Mg(2+) pocket. Catalysis depends on Glu186, which acts as the Proton acceptor.

It belongs to the PanB family. As to quaternary structure, homodecamer; pentamer of dimers. The cofactor is Mg(2+).

Its subcellular location is the cytoplasm. The enzyme catalyses 3-methyl-2-oxobutanoate + (6R)-5,10-methylene-5,6,7,8-tetrahydrofolate + H2O = 2-dehydropantoate + (6S)-5,6,7,8-tetrahydrofolate. It functions in the pathway cofactor biosynthesis; (R)-pantothenate biosynthesis; (R)-pantoate from 3-methyl-2-oxobutanoate: step 1/2. Functionally, catalyzes the reversible reaction in which hydroxymethyl group from 5,10-methylenetetrahydrofolate is transferred onto alpha-ketoisovalerate to form ketopantoate. This is 3-methyl-2-oxobutanoate hydroxymethyltransferase from Xanthomonas euvesicatoria pv. vesicatoria (strain 85-10) (Xanthomonas campestris pv. vesicatoria).